The primary structure comprises 323 residues: ADP/ATP translocase 4 (323 aa).

Residues 1–23 are Mitochondrial intermembrane-facing; sequence MQREPPKRKQEKKVEKGLFDATS. Residues 22–114 form a Solcar 1 repeat; the sequence is TSFGKDLLAG…FAFKDKYKQL (93 aa). Residues 24-53 form a helical membrane-spanning segment; it reads FGKDLLAGGVAAAVSKTTVAPIERVKLLLQ. The Mitochondrial matrix segment spans residues 54–90; that stretch reads VQASSKQISPEAQYKGIVDCLVRIPREQGFLSYWRGN. Residues 91–115 form a helical membrane-spanning segment; sequence LANVIRYFPTQALNFAFKDKYKQLF. The ADP site is built by R96 and K108. Over 116 to 125 the chain is Mitochondrial intermembrane; the sequence is MSGVNKEKQF. The chain crosses the membrane as a helical span at residues 126–146; sequence WRWFLANLASGGAAGATSLCV. Solcar repeat units lie at residues 127-217 and 224-311; these read RWFL…VKGL and THFL…IKDL. Residues 147–194 are Mitochondrial matrix-facing; that stretch reads VYPLDFARTRLGADIGKGPEERQFKGLGDCIMKIAKSDGIVGLYQGFG. Residues 195–215 traverse the membrane as a helical segment; that stretch reads VSVQGIIVYRASYFGAYDTVK. Over 216-226 the chain is Mitochondrial intermembrane; sequence GLLPKPKETHF. A helical transmembrane segment spans residues 227–247; that stretch reads LVSFFIAQVVTTCSGILSYPF. Topologically, residues 248 to 287 are mitochondrial matrix; it reads DTVRRRMMMQSGEAERQYKGTLDCFMKIYQQEGIGAFFRG. R251 serves as a coordination point for ADP. Residues 251 to 256 form an important for transport activity region; the sequence is RRRMMM. The Nucleotide carrier signature motif signature appears at 251-256; it reads RRRMMM. Residues 288–305 traverse the membrane as a helical segment; sequence AFSNILRGTGGALVLVLY. Residues 306–323 lie on the Mitochondrial intermembrane side of the membrane; that stretch reads DKIKDLLNIDIGGSSSGD.

The protein belongs to the mitochondrial carrier (TC 2.A.29) family. Monomer.

The protein localises to the mitochondrion inner membrane. Its subcellular location is the membrane. It is found in the cell projection. It localises to the cilium. The protein resides in the flagellum membrane. It carries out the reaction ADP(in) + ATP(out) = ADP(out) + ATP(in). The enzyme catalyses dATP(out) + ADP(in) = dATP(in) + ADP(out). It catalyses the reaction dADP(in) + ADP(out) = dADP(out) + ADP(in). The catalysed reaction is H(+)(in) = H(+)(out). With respect to regulation, the matrix-open state (m-state) is inhibited by the membrane-permeable bongkrekic acid (BKA). The cytoplasmic-open state (c-state) is inhibited by the membrane-impermeable toxic inhibitor carboxyatractyloside (CATR). Proton transporter activity is inhibited by ADP:ATP antiporter activity. In terms of biological role, ADP:ATP antiporter that mediates import of ADP into the mitochondrial matrix for ATP synthesis, and export of ATP out to fuel the cell. Cycles between the cytoplasmic-open state (c-state) and the matrix-open state (m-state): operates by the alternating access mechanism with a single substrate-binding site intermittently exposed to either the cytosolic (c-state) or matrix (m-state) side of the inner mitochondrial membrane. Specifically required during spermatogenesis, probably to mediate ADP:ATP exchange in spermatocytes. Large ATP supplies from mitochondria may be critical for normal progression of spermatogenesis during early stages of meiotic prophase I, including DNA double-strand break repair and chromosomal synapsis. In addition to its ADP:ATP antiporter activity, also involved in mitochondrial uncoupling and mitochondrial permeability transition pore (mPTP) activity. Plays a role in mitochondrial uncoupling by acting as a proton transporter: proton transport uncouples the proton flows via the electron transport chain and ATP synthase to reduce the efficiency of ATP production and cause mitochondrial thermogenesis. Proton transporter activity is inhibited by ADP:ATP antiporter activity, suggesting that SLC25A31/ANT4 acts as a master regulator of mitochondrial energy output by maintaining a delicate balance between ATP production (ADP:ATP antiporter activity) and thermogenesis (proton transporter activity). Proton transporter activity requires free fatty acids as cofactor, but does not transport it. Among nucleotides, may also exchange ADP for dATP and dADP. Also plays a key role in mPTP opening, a non-specific pore that enables free passage of the mitochondrial membranes to solutes of up to 1.5 kDa, and which contributes to cell death. It is however unclear if SLC25A31/ANT4 constitutes a pore-forming component of mPTP or regulates it. This chain is ADP/ATP translocase 4, found in Bos taurus (Bovine).